The primary structure comprises 200 residues: Small ribosomal subunit protein uS4 (200 aa).

Residues 22-42 are disordered; it reads TGKELQKRPYPPGQHGPGQRR. In terms of domain architecture, S4 RNA-binding spans 92 to 152; that stretch reads SRLDNLVYRL…EKSRNLQVIK (61 aa).

It belongs to the universal ribosomal protein uS4 family. As to quaternary structure, part of the 30S ribosomal subunit. Contacts protein S5. The interaction surface between S4 and S5 is involved in control of translational fidelity.

In terms of biological role, one of the primary rRNA binding proteins, it binds directly to 16S rRNA where it nucleates assembly of the body of the 30S subunit. Its function is as follows. With S5 and S12 plays an important role in translational accuracy. In Geobacillus stearothermophilus (Bacillus stearothermophilus), this protein is Small ribosomal subunit protein uS4 (rpsD).